The following is a 901-amino-acid chain: Protein translocase subunit SecA (901 aa).

ATP contacts are provided by residues glutamine 87, 105 to 109 (GEGKT), and aspartate 512. Residues cysteine 885, cysteine 887, cysteine 896, and histidine 897 each coordinate Zn(2+).

This sequence belongs to the SecA family. Monomer and homodimer. Part of the essential Sec protein translocation apparatus which comprises SecA, SecYEG and auxiliary proteins SecDF-YajC and YidC. It depends on Zn(2+) as a cofactor.

Its subcellular location is the cell inner membrane. It is found in the cytoplasm. The enzyme catalyses ATP + H2O + cellular proteinSide 1 = ADP + phosphate + cellular proteinSide 2.. In terms of biological role, part of the Sec protein translocase complex. Interacts with the SecYEG preprotein conducting channel. Has a central role in coupling the hydrolysis of ATP to the transfer of proteins into and across the cell membrane, serving both as a receptor for the preprotein-SecB complex and as an ATP-driven molecular motor driving the stepwise translocation of polypeptide chains across the membrane. The chain is Protein translocase subunit SecA from Salmonella paratyphi B (strain ATCC BAA-1250 / SPB7).